The sequence spans 137 residues: MGVTVDLEVVTPEKLILSETVQLVTVPGSEGYFGVLSGHVPMISSLRSGVVRMGQGDDAVHLAVSKGFAEVRPDRVTLLVDRAVFGKKVDAAAVTKIRDAAQDELDGTPTESEEYETLRDKLDFANAQLAALEGELV.

The protein belongs to the ATPase epsilon chain family. As to quaternary structure, F-type ATPases have 2 components, CF(1) - the catalytic core - and CF(0) - the membrane proton channel. CF(1) has five subunits: alpha(3), beta(3), gamma(1), delta(1), epsilon(1). CF(0) has three main subunits: a, b and c.

The protein localises to the cell inner membrane. In terms of biological role, produces ATP from ADP in the presence of a proton gradient across the membrane. The chain is ATP synthase epsilon chain from Magnetococcus marinus (strain ATCC BAA-1437 / JCM 17883 / MC-1).